The sequence spans 843 residues: Translation initiation factor IF-2 (843 aa).

Disordered stretches follow at residues 50–72 and 94–260; these read LKSSHKSKAEEPRKITLQRKTTS and QRSP…TGPV. Positions 96–135 are enriched in basic and acidic residues; it reads SPEEIQAEQKREQDERRAAENAARDKVDADVRQRNEEQAR. Low complexity predominate over residues 139–173; the sequence is TATAAAAPAAKAEPAPAAAAPAPAPVVADAPASED. 2 stretches are compositionally biased toward basic and acidic residues: residues 174 to 203 and 227 to 236; these read AAARAAERKKDETRRNESRTRDDDRRRGEA and TTDEESDGAR. Over residues 237-250 the composition is skewed to basic residues; it reads RGRGGKGKLKKRNQ. The tr-type G domain maps to 343 to 516; it reads SRAPVVTVMG…EVLELTATPT (174 aa). The interval 352 to 359 is G1; that stretch reads GHVDHGKT. Position 352–359 (352–359) interacts with GTP; the sequence is GHVDHGKT. The tract at residues 377 to 381 is G2; the sequence is GITQH. Residues 398 to 401 are G3; the sequence is DTPG. GTP-binding positions include 398–402 and 452–455; these read DTPGH and NKID. Positions 452–455 are G4; that stretch reads NKID. Positions 488 to 490 are G5; that stretch reads SAK.

This sequence belongs to the TRAFAC class translation factor GTPase superfamily. Classic translation factor GTPase family. IF-2 subfamily.

It localises to the cytoplasm. One of the essential components for the initiation of protein synthesis. Protects formylmethionyl-tRNA from spontaneous hydrolysis and promotes its binding to the 30S ribosomal subunits. Also involved in the hydrolysis of GTP during the formation of the 70S ribosomal complex. The chain is Translation initiation factor IF-2 from Pseudomonas putida (strain W619).